The following is a 203-amino-acid chain: Monothiol glutaredoxin-7 (203 aa).

Residues 1–32 (MAIVINKRNVRVLVITNLLLIVVFFVLRNSNA) form the signal peptide. Residues 88–191 (AAEYNKIMEQ…DSFKKWSDGA (104 aa)) enclose the Glutaredoxin domain. Cys-108 provides a ligand contact to [2Fe-2S] cluster.

It belongs to the glutaredoxin family. Monothiol subfamily.

This Saccharomyces cerevisiae (strain ATCC 204508 / S288c) (Baker's yeast) protein is Monothiol glutaredoxin-7 (GRX7).